Reading from the N-terminus, the 261-residue chain is Carnitinyl-CoA dehydratase (261 aa).

Glu-111 serves as the catalytic Nucleophile. Glu-131 functions as the Proton acceptor in the catalytic mechanism.

It belongs to the enoyl-CoA hydratase/isomerase family.

The enzyme catalyses (R)-carnitinyl-CoA = crotonobetainyl-CoA + H2O. The protein operates within amine and polyamine metabolism; carnitine metabolism. Its function is as follows. Catalyzes the reversible dehydration of L-carnitinyl-CoA to crotonobetainyl-CoA. This chain is Carnitinyl-CoA dehydratase, found in Salmonella dublin (strain CT_02021853).